A 569-amino-acid polypeptide reads, in one-letter code: 3-(3-hydroxy-phenyl)propionate/3-hydroxycinnamic acid hydroxylase (569 aa).

Residues 12–41 (DVVV…VVDE) and 277–287 (FRKGRLMLAGD) each bind FAD.

The protein belongs to the PheA/TfdB FAD monooxygenase family. The cofactor is FAD.

It catalyses the reaction 3-(3-hydroxyphenyl)propanoate + NADH + O2 + H(+) = 3-(2,3-dihydroxyphenyl)propanoate + NAD(+) + H2O. The catalysed reaction is (2E)-3-(3-hydroxyphenyl)prop-2-enoate + NADH + O2 + H(+) = (2E)-3-(2,3-dihydroxyphenyl)prop-2-enoate + NAD(+) + H2O. Its pathway is aromatic compound metabolism; 3-phenylpropanoate degradation. In terms of biological role, catalyzes the insertion of one atom of molecular oxygen into position 2 of the phenyl ring of 3-(3-hydroxyphenyl)propionate (3-HPP) and hydroxycinnamic acid (3HCI). The polypeptide is 3-(3-hydroxy-phenyl)propionate/3-hydroxycinnamic acid hydroxylase (Mycolicibacterium vanbaalenii (strain DSM 7251 / JCM 13017 / BCRC 16820 / KCTC 9966 / NRRL B-24157 / PYR-1) (Mycobacterium vanbaalenii)).